The chain runs to 450 residues: Molybdate-anion transporter (450 aa).

The next 12 membrane-spanning stretches (helical) occupy residues methionine 1–leucine 21, leucine 43–leucine 63, isoleucine 79–valine 99, phenylalanine 128–phenylalanine 148, alanine 174–serine 194, tryptophan 195–glycine 215, valine 249–leucine 269, glycine 278–leucine 298, proline 311–phenylalanine 331, phenylalanine 344–leucine 364, glycine 376–leucine 396, and phenylalanine 409–valine 429.

This sequence belongs to the major facilitator superfamily.

It localises to the cell membrane. In terms of biological role, mediates high-affinity intracellular uptake of the rare oligo-element molybdenum. This Pongo abelii (Sumatran orangutan) protein is Molybdate-anion transporter (MFSD5).